The following is a 426-amino-acid chain: PI-PLC X domain-containing protein At5g67130 (426 aa).

Residues 1 to 28 (MSACINGLCRAVTVSLLLLLLSFSFSSA) form the signal peptide. The 157-residue stretch at 76–232 (IINGLPFNKY…MVQENHRLLV (157 aa)) folds into the PI-PLC X-box domain. N-linked (GlcNAc...) asparagine glycans are attached at residues Asn-151 and Asn-255. Residues 258-277 (GDPGVKRGSCPNRKESQPLN) form a disordered region. An N-linked (GlcNAc...) asparagine glycan is attached at Asn-370. Ser-404 carries GPI-anchor amidated serine lipidation. Residues 405–426 (VAQLNNIVVFCFSLLPLLIFLL) constitute a propeptide, removed in mature form.

It localises to the cell membrane. This is PI-PLC X domain-containing protein At5g67130 from Arabidopsis thaliana (Mouse-ear cress).